A 178-amino-acid polypeptide reads, in one-letter code: Ribosomal RNA small subunit methyltransferase G (178 aa).

S-adenosyl-L-methionine is bound by residues Gly54, Leu59, 105-106, and Arg120; that span reads LE.

This sequence belongs to the methyltransferase superfamily. RNA methyltransferase RsmG family.

The protein localises to the cytoplasm. The catalysed reaction is guanosine(527) in 16S rRNA + S-adenosyl-L-methionine = N(7)-methylguanosine(527) in 16S rRNA + S-adenosyl-L-homocysteine. In terms of biological role, specifically methylates the N7 position of guanine in position 527 of 16S rRNA. The sequence is that of Ribosomal RNA small subunit methyltransferase G from Helicobacter pylori (strain HPAG1).